Consider the following 567-residue polypeptide: Proline--tRNA ligase (567 aa).

The protein belongs to the class-II aminoacyl-tRNA synthetase family. ProS type 1 subfamily. In terms of assembly, homodimer.

Its subcellular location is the cytoplasm. It catalyses the reaction tRNA(Pro) + L-proline + ATP = L-prolyl-tRNA(Pro) + AMP + diphosphate. Catalyzes the attachment of proline to tRNA(Pro) in a two-step reaction: proline is first activated by ATP to form Pro-AMP and then transferred to the acceptor end of tRNA(Pro). As ProRS can inadvertently accommodate and process non-cognate amino acids such as alanine and cysteine, to avoid such errors it has two additional distinct editing activities against alanine. One activity is designated as 'pretransfer' editing and involves the tRNA(Pro)-independent hydrolysis of activated Ala-AMP. The other activity is designated 'posttransfer' editing and involves deacylation of mischarged Ala-tRNA(Pro). The misacylated Cys-tRNA(Pro) is not edited by ProRS. This chain is Proline--tRNA ligase, found in Idiomarina loihiensis (strain ATCC BAA-735 / DSM 15497 / L2-TR).